A 105-amino-acid chain; its full sequence is Met repressor (105 aa).

Belongs to the MetJ family. In terms of assembly, homodimer.

It is found in the cytoplasm. In terms of biological role, this regulatory protein, when combined with SAM (S-adenosylmethionine) represses the expression of the methionine regulon and of enzymes involved in SAM synthesis. This chain is Met repressor, found in Haemophilus ducreyi (strain 35000HP / ATCC 700724).